A 563-amino-acid chain; its full sequence is uncharacterized protein (563 aa).

A disordered region spans residues 30-303 (QSIEIQPEEK…EKSPEKQVEI (274 aa)). Positions 36–56 (PEEKPSEEKQPEEKSSEEKPK) are enriched in basic and acidic residues. The span at 61–72 (SAINSEKTQKPI) shows a compositional bias: polar residues. Basic and acidic residues-rich tracts occupy residues 101–115 (TTER…DDKQ), 123–276 (ERGR…EPRP), and 282–303 (EKSP…QVEI).

This sequence belongs to the mimivirus L41 family.

This is an uncharacterized protein from Acanthamoeba polyphaga (Amoeba).